The primary structure comprises 180 residues: Nucleoside-triphosphatase THEP1 (180 aa).

ATP contacts are provided by residues 9 to 16 (GPAGVGKT) and 104 to 111 (LIVIDEIG).

This sequence belongs to the THEP1 NTPase family.

It carries out the reaction a ribonucleoside 5'-triphosphate + H2O = a ribonucleoside 5'-diphosphate + phosphate + H(+). Functionally, has nucleotide phosphatase activity towards ATP, GTP, CTP, TTP and UTP. May hydrolyze nucleoside diphosphates with lower efficiency. This chain is Nucleoside-triphosphatase THEP1, found in Thermococcus kodakarensis (strain ATCC BAA-918 / JCM 12380 / KOD1) (Pyrococcus kodakaraensis (strain KOD1)).